We begin with the raw amino-acid sequence, 377 residues long: Peptidyl-prolyl cis-trans isomerase D (377 aa).

The PPIase cyclophilin-type domain maps to 11–178; that stretch reads YFDIQIGSQK…TDVTIVDCGE (168 aa). TPR repeat units follow at residues 220-253, 273-306, and 314-347; these read ASEL…LNEF, FTLH…ADAA, and AKAY…APGD.

The protein belongs to the cyclophilin-type PPIase family. PPIase D subfamily.

The protein localises to the cytoplasm. The enzyme catalyses [protein]-peptidylproline (omega=180) = [protein]-peptidylproline (omega=0). PPIases accelerate the folding of proteins. It catalyzes the cis-trans isomerization of proline imidic peptide bonds in oligopeptides. The protein is Peptidyl-prolyl cis-trans isomerase D (cpr6) of Aspergillus fumigatus (strain ATCC MYA-4609 / CBS 101355 / FGSC A1100 / Af293) (Neosartorya fumigata).